Here is a 155-residue protein sequence, read N- to C-terminus: Interleukin-2 (155 aa).

An N-terminal signal peptide occupies residues 1-20; the sequence is MYKMQLLSCIALTLVLVANS. The O-linked (GalNAc...) threonine glycan is linked to Thr-23. A disulfide bridge connects residues Cys-79 and Cys-127.

It belongs to the IL-2 family.

The protein resides in the secreted. In terms of biological role, cytokine produced by activated CD4-positive helper T-cells and to a lesser extend activated CD8-positive T-cells and natural killer (NK) cells that plays pivotal roles in the immune response and tolerance. Binds to a receptor complex composed of either the high-affinity trimeric IL-2R (IL2RA/CD25, IL2RB/CD122 and IL2RG/CD132) or the low-affinity dimeric IL-2R (IL2RB and IL2RG). Interaction with the receptor leads to oligomerization and conformation changes in the IL-2R subunits resulting in downstream signaling starting with phosphorylation of JAK1 and JAK3. In turn, JAK1 and JAK3 phosphorylate the receptor to form a docking site leading to the phosphorylation of several substrates including STAT5. This process leads to activation of several pathways including STAT, phosphoinositide-3-kinase/PI3K and mitogen-activated protein kinase/MAPK pathways. Functions as a T-cell growth factor and can increase NK-cell cytolytic activity as well. Promotes strong proliferation of activated B-cells and subsequently immunoglobulin production. Plays a pivotal role in regulating the adaptive immune system by controlling the survival and proliferation of regulatory T-cells, which are required for the maintenance of immune tolerance. Moreover, participates in the differentiation and homeostasis of effector T-cell subsets, including Th1, Th2, Th17 as well as memory CD8-positive T-cells. The protein is Interleukin-2 (IL2) of Halichoerus grypus (Gray seal).